The following is a 306-amino-acid chain: Homoserine O-acetyltransferase (306 aa).

The active-site Acyl-thioester intermediate is C142. Substrate contacts are provided by K163 and S192. H235 (proton acceptor) is an active-site residue. E237 is an active-site residue. R249 provides a ligand contact to substrate.

It belongs to the MetA family.

It localises to the cytoplasm. The enzyme catalyses L-homoserine + acetyl-CoA = O-acetyl-L-homoserine + CoA. The protein operates within amino-acid biosynthesis; L-methionine biosynthesis via de novo pathway; O-acetyl-L-homoserine from L-homoserine: step 1/1. In terms of biological role, transfers an acetyl group from acetyl-CoA to L-homoserine, forming acetyl-L-homoserine. In Brucella melitensis biotype 1 (strain ATCC 23456 / CCUG 17765 / NCTC 10094 / 16M), this protein is Homoserine O-acetyltransferase.